The following is a 218-amino-acid chain: MDKSGSPNASRTSRRRRPRRGSRSASGADAGLRALTQQMLKLNKTLAIGRPTLNHPTFAGSESCKPGYTFTSITLKPPEIEKGSYFGRRLSLPDSVTDYDKKQVSRIQIRINPLPKFDSTVWVTVRKVPSSSDLSVAAITAMFGDGKSPVLVYQYAASGVQANNKLLYNLSEMRADIGDMRKYAVLVYSKDDKLEKDEIVLHVDVEHQRIPISRMLPT.

An N-acetylmethionine; by host modification is found at Met-1. Positions 1-31 are disordered; it reads MDKSGSPNASRTSRRRRPRRGSRSASGADAG. Residues 12–22 are compositionally biased toward basic residues; that stretch reads TSRRRRPRRGS.

The protein belongs to the cucumovirus capsid protein family.

The protein localises to the virion. In terms of biological role, capsid protein. Probably binds RNA and plays a role in packaging. The chain is Capsid protein from Cucumber mosaic virus (strain Trk7) (CMV).